A 313-amino-acid chain; its full sequence is D-alanine--D-alanine ligase (313 aa).

Positions 108-308 (KLVWQQLGIP…YQELVVGVLA (201 aa)) constitute an ATP-grasp domain. Position 138–193 (138–193 (VAKLGLPLFVKPASEGSSVAVIKVKSADALPAALIEAVKYDKIVVVEKSVEGGGEY)) interacts with ATP. 3 residues coordinate Mg(2+): aspartate 262, glutamate 275, and asparagine 277.

This sequence belongs to the D-alanine--D-alanine ligase family. Mg(2+) is required as a cofactor. Mn(2+) serves as cofactor.

It localises to the cytoplasm. The enzyme catalyses 2 D-alanine + ATP = D-alanyl-D-alanine + ADP + phosphate + H(+). It participates in cell wall biogenesis; peptidoglycan biosynthesis. Cell wall formation. The polypeptide is D-alanine--D-alanine ligase (Paraburkholderia phytofirmans (strain DSM 17436 / LMG 22146 / PsJN) (Burkholderia phytofirmans)).